Here is a 111-residue protein sequence, read N- to C-terminus: UPF0060 membrane protein HCH_03337 (111 aa).

A run of 4 helical transmembrane segments spans residues 8–28 (LLFA…WLVI), 33–53 (SLWL…LLTL), 65–85 (YGGM…GVGL), and 88–108 (FDFL…LQPI).

The protein belongs to the UPF0060 family.

The protein resides in the cell inner membrane. This is UPF0060 membrane protein HCH_03337 from Hahella chejuensis (strain KCTC 2396).